Consider the following 423-residue polypeptide: Limonoid 21-O-acetyltransferse (423 aa).

Active-site proton acceptor residues include H152 and D362.

It belongs to the plant acyltransferase family. In terms of assembly, monomer. As to expression, mainly expressed in petioles.

It carries out the reaction isomeliandiol + acetyl-CoA = 21-O-acetyl-isomeliandiol + CoA. It participates in secondary metabolite biosynthesis; terpenoid biosynthesis. In terms of biological role, acetyltransferase involved in the biosynthesis of limonoids triterpene natural products such as azadirachtin, an antifeedant widely used as bioinsecticide, and possessing many medicinal applications including anti-tumoral, anti-malarial, anti-rheumatic, antibacterial, anti-inflammatory, anti-pyretic and diuretic effects. Catalyzes the formation of 21-O-acetyl-isomeliandiol from isomeliandiol. This is Limonoid 21-O-acetyltransferse from Melia azedarach (Chinaberry tree).